The primary structure comprises 66 residues: Surface composition regulator (66 aa).

It belongs to the GlgS family.

Functionally, major determinant of cell surface composition. Negatively regulates motility, adhesion and synthesis of biofilm exopolysaccharides. This is Surface composition regulator from Escherichia coli O139:H28 (strain E24377A / ETEC).